The chain runs to 332 residues: Putative threonine dehydratase (332 aa).

N6-(pyridoxal phosphate)lysine is present on K56.

Belongs to the serine/threonine dehydratase family. It depends on pyridoxal 5'-phosphate as a cofactor.

The enzyme catalyses L-threonine = 2-oxobutanoate + NH4(+). The protein operates within amino-acid biosynthesis; L-isoleucine biosynthesis; 2-oxobutanoate from L-threonine: step 1/1. This is Putative threonine dehydratase from Sinorhizobium fredii (strain NBRC 101917 / NGR234).